We begin with the raw amino-acid sequence, 148 residues long: UPF0756 membrane protein YeaL (148 aa).

A run of 4 helical transmembrane segments spans residues 14-34, 51-71, 86-106, and 121-141; these read ALGF…LIIV, LSIG…SGTL, LVAI…VTLM, and VLGV…AGLV.

Belongs to the UPF0756 family.

The protein resides in the cell membrane. This chain is UPF0756 membrane protein YeaL, found in Shigella dysenteriae serotype 1 (strain Sd197).